Reading from the N-terminus, the 981-residue chain is Mediator of RNA polymerase II transcription subunit 5 (981 aa).

It belongs to the Mediator complex subunit 5 family. Component of the Mediator complex.

It is found in the nucleus. Functionally, component of the Mediator complex, a coactivator involved in the regulated transcription of nearly all RNA polymerase II-dependent genes. Mediator functions as a bridge to convey information from gene-specific regulatory proteins to the basal RNA polymerase II transcription machinery. Mediator is recruited to promoters by direct interactions with regulatory proteins and serves as a scaffold for the assembly of a functional preinitiation complex with RNA polymerase II and the general transcription factors. This chain is Mediator of RNA polymerase II transcription subunit 5 (NUT1), found in Scheffersomyces stipitis (strain ATCC 58785 / CBS 6054 / NBRC 10063 / NRRL Y-11545) (Yeast).